We begin with the raw amino-acid sequence, 1178 residues long: Mannosyltransferase regulator 4 (1178 aa).

The Cytoplasmic segment spans residues 1–27 (MLQRISSKLHRRFLSGLLRVKHYPLRR). The chain crosses the membrane as a helical; Signal-anchor for type II membrane protein span at residues 28–48 (ILLPLILLQIIIITFIWSNSP). At 49–1178 (QRNGLGRDAD…KKKQEEGHSN (1130 aa)) the chain is on the lumenal side. The DXD signature appears at 519-521 (DFD). Positions 1041 to 1178 (EKKKKEEEEK…KKKQEEGHSN (138 aa)) are disordered. 6 tandem repeats follow at residues 1042-1049 (KKKKEEEE), 1050-1057 (KKKKEEEE), 1058-1065 (KKKKEEEE), 1066-1073 (KKKKEEEE), 1074-1081 (KKKKEEEE), and 1082-1089 (KKKKEEEE). Positions 1042–1174 (KKKKEEEEKK…EEEEKKKQEE (133 aa)) are 17 X 8 AA tandem repeats of K-K-K-K-E-E-E-E. The 7; approximate repeat unit spans residues 1090-1097 (KKKQEEEE). Copy 8 of the repeat occupies 1098 to 1105 (KKKKEEEE). The stretch at 1106–1113 (KKKQEEGE) is one 9; approximate repeat. The stretch at 1114–1121 (KMKNEDEE) is one 10; approximate repeat. The 11; approximate repeat unit spans residues 1122 to 1129 (NKKNEDEE). Copy 12 of the repeat occupies 1130–1137 (KKKNEEEE). One copy of the 13; approximate repeat lies at 1138-1144 (KKKQEEK). A 14; approximate repeat occupies 1145-1152 (NKKNEDEE). The stretch at 1153-1160 (KKKQEEEE) is one 15; approximate repeat. A 16; approximate repeat occupies 1161–1168 (KKKNEEEE). The 17; truncated repeat unit spans residues 1169-1174 (KKKQEE).

It belongs to the MNN4 family.

It localises to the golgi apparatus membrane. Golgi apparatus protein involved in N-glycan mannosylphosphorylation. While MNN4 seems to have a regulatory role in N-glycan mannosylphosphorylation, a transferase activity of MNN4 can not be ruled out. Mediates mannosylphosphate transfer in both the core and outer chain portions of N-linked oligosaccharides. Has partially redundant function with MNN14. In Saccharomyces cerevisiae (strain ATCC 204508 / S288c) (Baker's yeast), this protein is Mannosyltransferase regulator 4.